A 447-amino-acid chain; its full sequence is Serine/threonine-protein phosphatase 2A 55 kDa regulatory subunit B gamma isoform (447 aa).

7 WD repeats span residues 22–61, 87–128, 171–209, 220–260, 279–317, 334–375, and 410–446; these read TEAD…KNAP, EIEE…KRPE, GHTY…RSFN, DLTE…LCDK, EIIS…RPIE, ENDC…DVTL, and DFTK…NSDM.

It belongs to the phosphatase 2A regulatory subunit B family. As to quaternary structure, PP2A consists of a common heterodimeric core enzyme, composed of a 36 kDa catalytic subunit (subunit C) and a 65 kDa constant regulatory subunit (PR65 or subunit A), that associates with a variety of regulatory subunits. Proteins that associate with the core dimer include three families of regulatory subunits B (the R2/B/PR55/B55, R3/B''/PR72/PR130/PR59 and R5/B'/B56 families), the 48 kDa variable regulatory subunit, viral proteins, and cell signaling molecules. Interacts with IER5.

Its function is as follows. The B regulatory subunit might modulate substrate selectivity and catalytic activity, and might also direct the localization of the catalytic enzyme to a particular subcellular compartment. The chain is Serine/threonine-protein phosphatase 2A 55 kDa regulatory subunit B gamma isoform (PPP2R2C) from Homo sapiens (Human).